Consider the following 449-residue polypeptide: Nucleoprotein (449 aa).

The interval 1 to 55 (MSFTPGKQSSSRASSGNRSGNGILKWADQSDQSRNVQTRGRRVQSKQTATSQQPS) is disordered. The span at 9–22 (SSSRASSGNRSGNG) shows a compositional bias: low complexity. 2 stretches are compositionally biased toward polar residues: residues 29 to 38 (QSDQSRNVQT) and 45 to 55 (SKQTATSQQPS). The tract at residues 52–194 (QQPSGGTVVP…GYYIEGSGRS (143 aa)) is RNA-binding. One can recognise a CoV N NTD domain in the interval 61 to 190 (PYYSWFSGIT…VLPQGYYIEG (130 aa)). RNA-binding residues include arginine 106, arginine 122, and arginine 164. 3 disordered regions span residues 158-231 (PADI…VTPD), 266-297 (ILNKPRQKRSPNKQCTVQQCFGKRGPNQNFGG), and 387-449 (MMNI…TSEI). At serine 167 the chain carries Phosphoserine; by host. At threonine 174 the chain carries Phosphothreonine; by host. Phosphoserine; by host is present on serine 191. 2 stretches are compositionally biased toward polar residues: residues 194-204 (SAPNSRSTSRA) and 212-227 (GSRSRANSGNRTSTPG). The CoV N CTD domain occupies 259–384 (AKEVRQKILN…QNLNAYQHQE (126 aa)). Over residues 266 to 276 (ILNKPRQKRSP) the composition is skewed to basic residues. The dimerization stretch occupies residues 266–385 (ILNKPRQKRS…NLNAYQHQED (120 aa)). Serine 391 carries the phosphoserine; by host modification. Over residues 400-410 (QKNGQVENDNI) the composition is skewed to polar residues. Positions 423-440 (KSRELTAEDISLLKKMDE) are enriched in basic and acidic residues. Serine 424 carries the phosphoserine; by host modification. A Phosphothreonine; by host modification is found at threonine 428.

It belongs to the betacoronavirus nucleocapsid protein family. As to quaternary structure, homooligomer. Both monomeric and oligomeric forms interact with RNA. Interacts with protein M. Interacts with NSP3; this interaction serves to tether the genome to the newly translated replicase-transcriptase complex at a very early stage of infection. In terms of processing, ADP-ribosylated. The ADP-ribosylation is retained in the virion during infection. Post-translationally, phosphorylated on serine and threonine residues.

The protein resides in the virion. It localises to the host endoplasmic reticulum-Golgi intermediate compartment. Its subcellular location is the host Golgi apparatus. Functionally, packages the positive strand viral genome RNA into a helical ribonucleocapsid (RNP) and plays a fundamental role during virion assembly through its interactions with the viral genome and membrane protein M. Plays an important role in enhancing the efficiency of subgenomic viral RNA transcription as well as viral replication. This chain is Nucleoprotein, found in Sus scrofa (Pig).